Reading from the N-terminus, the 363-residue chain is DNA replication and repair protein RecF (363 aa).

30–37 (GSNGSGKT) contacts ATP.

It belongs to the RecF family.

It is found in the cytoplasm. In terms of biological role, the RecF protein is involved in DNA metabolism; it is required for DNA replication and normal SOS inducibility. RecF binds preferentially to single-stranded, linear DNA. It also seems to bind ATP. The protein is DNA replication and repair protein RecF of Photorhabdus laumondii subsp. laumondii (strain DSM 15139 / CIP 105565 / TT01) (Photorhabdus luminescens subsp. laumondii).